An 87-amino-acid chain; its full sequence is NAD(P)H-quinone oxidoreductase subunit O (87 aa).

The span at 1 to 10 (MSEQTGKVDD) shows a compositional bias: basic and acidic residues. The interval 1 to 23 (MSEQTGKVDDSQSPPKVQKKLRK) is disordered.

Belongs to the complex I NdhO subunit family. NDH-1 can be composed of about 15 different subunits; different subcomplexes with different compositions have been identified which probably have different functions.

It is found in the cellular thylakoid membrane. The catalysed reaction is a plastoquinone + NADH + (n+1) H(+)(in) = a plastoquinol + NAD(+) + n H(+)(out). It carries out the reaction a plastoquinone + NADPH + (n+1) H(+)(in) = a plastoquinol + NADP(+) + n H(+)(out). NDH-1 shuttles electrons from an unknown electron donor, via FMN and iron-sulfur (Fe-S) centers, to quinones in the respiratory and/or the photosynthetic chain. The immediate electron acceptor for the enzyme in this species is believed to be plastoquinone. Couples the redox reaction to proton translocation, and thus conserves the redox energy in a proton gradient. Cyanobacterial NDH-1 also plays a role in inorganic carbon-concentration. This Prochlorococcus marinus (strain NATL2A) protein is NAD(P)H-quinone oxidoreductase subunit O.